Consider the following 267-residue polypeptide: Collectin-11 (267 aa).

Positions methionine 1–alanine 21 are cleaved as a signal peptide. The disordered stretch occupies residues glycine 40–cysteine 109. Composition is skewed to basic and acidic residues over residues aspartate 41–alanine 50 and glutamate 62–glutamine 71. Positions glycine 49 to proline 108 constitute a Collagen-like domain. Positions glutamate 110–glutamate 144 form a coiled coil. Residues threonine 145 to glutamate 261 enclose the C-type lectin domain. Disulfide bonds link cysteine 166–cysteine 260 and cysteine 238–cysteine 252. An a carbohydrate-binding site is contributed by arginine 196. Ca(2+)-binding residues include aspartate 203, glutamate 207, glutamate 228, asparagine 230, asparagine 231, aspartate 234, glutamate 236, and aspartate 237. An a carbohydrate-binding site is contributed by glutamate 236. Residues glutamate 240 and asparagine 248–valine 250 each bind a carbohydrate. Asparagine 248 and aspartate 249 together coordinate Ca(2+).

This sequence belongs to the COLEC10/COLEC11 family. Homotrimer; disulfide-linked. Interacts with MASP1; probably triggers the lectin pathway of complement.

The protein localises to the secreted. Its function is as follows. Lectin that plays a role in innate immunity, apoptosis and embryogenesis. Calcium-dependent lectin that binds self and non-self glycoproteins presenting high mannose oligosaccharides with at least one terminal alpha-1,2-linked mannose epitope. Primarily recognizes the terminal disaccharide of the glycan. Also recognizes a subset of fucosylated glycans and lipopolysaccharides. Plays a role in innate immunity through its ability to bind non-self sugars presented by microorganisms and to activate the complement through the recruitment of MAPS1. Also plays a role in apoptosis through its ability to bind in a calcium-independent manner the DNA present at the surface of apoptotic cells and to activate the complement in response to this binding. Finally, plays a role in development, probably serving as a guidance cue during the migration of neural crest cells and other cell types during embryogenesis. In Bos taurus (Bovine), this protein is Collectin-11 (COLEC11).